Consider the following 328-residue polypeptide: Nucleotide-binding protein Blon_1085/BLIJ_1109 (328 aa).

The segment at 1–33 (MSQQTTIRDTGEAAATNAPANSATSTSTPDNQP) is disordered. Residues 13 to 29 (AAATNAPANSATSTSTP) show a composition bias toward low complexity. 46–53 (GMSGAGRS) contacts ATP. 101-104 (DVRS) contacts GTP.

This sequence belongs to the RapZ-like family.

In terms of biological role, displays ATPase and GTPase activities. In Bifidobacterium longum subsp. infantis (strain ATCC 15697 / DSM 20088 / JCM 1222 / NCTC 11817 / S12), this protein is Nucleotide-binding protein Blon_1085/BLIJ_1109.